The following is a 490-amino-acid chain: AP-5 complex subunit mu-1 (490 aa).

Residues 206-476 (KPQVSISITE…LISSDYYIWN (271 aa)) form the MHD domain.

Belongs to the adaptor complexes medium subunit family. As to quaternary structure, probably part of the adaptor protein complex 5 (AP-5) a tetramer composed of AP5B1, AP5M1, AP5S1 and AP5Z1. As to expression, expressed in various tumor cell lines including Jurkat, Hep-G2 and HeLa.

Its subcellular location is the cytoplasm. It is found in the cytosol. It localises to the late endosome membrane. The protein resides in the lysosome membrane. As part of AP-5, a probable fifth adaptor protein complex it may be involved in endosomal transport. According to PubMed:18395520, it may play a role in cell death. The sequence is that of AP-5 complex subunit mu-1 (AP5M1) from Homo sapiens (Human).